The following is a 410-amino-acid chain: Dual-specificity RNA methyltransferase RlmN (410 aa).

Residue glutamate 123 is the Proton acceptor of the active site. The Radical SAM core domain maps to 129–378 (EEGRGTLCIS…IRTPRGRDIL (250 aa)). The cysteines at positions 136 and 381 are disulfide-linked. Cysteine 143, cysteine 147, and cysteine 150 together coordinate [4Fe-4S] cluster. S-adenosyl-L-methionine contacts are provided by residues 207 to 208 (GE), serine 239, 261 to 263 (SLH), and asparagine 338. The active-site S-methylcysteine intermediate is cysteine 381.

This sequence belongs to the radical SAM superfamily. RlmN family. [4Fe-4S] cluster serves as cofactor.

It is found in the cytoplasm. The catalysed reaction is adenosine(2503) in 23S rRNA + 2 reduced [2Fe-2S]-[ferredoxin] + 2 S-adenosyl-L-methionine = 2-methyladenosine(2503) in 23S rRNA + 5'-deoxyadenosine + L-methionine + 2 oxidized [2Fe-2S]-[ferredoxin] + S-adenosyl-L-homocysteine. The enzyme catalyses adenosine(37) in tRNA + 2 reduced [2Fe-2S]-[ferredoxin] + 2 S-adenosyl-L-methionine = 2-methyladenosine(37) in tRNA + 5'-deoxyadenosine + L-methionine + 2 oxidized [2Fe-2S]-[ferredoxin] + S-adenosyl-L-homocysteine. In terms of biological role, specifically methylates position 2 of adenine 2503 in 23S rRNA and position 2 of adenine 37 in tRNAs. m2A2503 modification seems to play a crucial role in the proofreading step occurring at the peptidyl transferase center and thus would serve to optimize ribosomal fidelity. The polypeptide is Dual-specificity RNA methyltransferase RlmN (Mesorhizobium japonicum (strain LMG 29417 / CECT 9101 / MAFF 303099) (Mesorhizobium loti (strain MAFF 303099))).